Reading from the N-terminus, the 164-residue chain is Phospholipase A and acyltransferase 4 (164 aa).

The interval 1–40 (MASPHQEPKPGDLIEIFRLGYEHWALYIGDGYVIHLAPPS) is essential for its ability regulate keratinocyte differentiation. Over 1–134 (MASPHQEPKP…SRCKQVEKAK (134 aa)) the chain is Cytoplasmic. The 117-residue stretch at 13-129 (LIEIFRLGYE…LRYGKSRCKQ (117 aa)) folds into the LRAT domain. Catalysis depends on residues His23 and His35. Cys113 acts as the Acyl-thioester intermediate in catalysis. Residues 124–164 (KSRCKQVEKAKVEVGVATALGILVVAGCSFAIRRYQKKATA) are interaction with TGM1. Residues 135–155 (VEVGVATALGILVVAGCSFAI) form a helical membrane-spanning segment. At 156 to 164 (RRYQKKATA) the chain is on the lumenal side.

The protein belongs to the H-rev107 family. Interacts with TGM1. Widely expressed.

It localises to the membrane. The catalysed reaction is a 1,2-diacyl-sn-glycero-3-phosphocholine + H2O = a 1-acyl-sn-glycero-3-phosphocholine + a fatty acid + H(+). The enzyme catalyses a 1,2-diacyl-sn-glycero-3-phosphocholine + H2O = a 2-acyl-sn-glycero-3-phosphocholine + a fatty acid + H(+). It catalyses the reaction 1,2-dihexadecanoyl-sn-glycero-3-phosphocholine + H2O = 1-hexadecanoyl-sn-glycero-3-phosphocholine + hexadecanoate + H(+). It carries out the reaction 1,2-dihexadecanoyl-sn-glycero-3-phosphocholine + H2O = 2-hexadecanoyl-sn-glycero-3-phosphocholine + hexadecanoate + H(+). The catalysed reaction is 1-hexadecanoyl-2-(9Z-octadecenoyl)-sn-glycero-3-phosphocholine + H2O = 2-(9Z-octadecenoyl)-sn-glycero-3-phosphocholine + hexadecanoate + H(+). The enzyme catalyses 1-hexadecanoyl-2-(9Z-octadecenoyl)-sn-glycero-3-phosphocholine + H2O = 1-hexadecanoyl-sn-glycero-3-phosphocholine + (9Z)-octadecenoate + H(+). It catalyses the reaction 1-hexadecanoyl-2-(5Z,8Z,11Z,14Z-eicosatetraenoyl)-sn-glycero-3-phosphocholine + H2O = 2-(5Z,8Z,11Z,14Z)-eicosatetraenoyl-sn-glycero-3-phosphocholine + hexadecanoate + H(+). It carries out the reaction 1-hexadecanoyl-2-(9Z,12Z-octadecadienoyl)-sn-glycero-3-phosphoethanolamine + H2O = 1-hexadecanoyl-sn-glycero-3-phosphoethanolamine + (9Z,12Z)-octadecadienoate + H(+). The catalysed reaction is 1-hexadecanoyl-2-(9Z,12Z-octadecadienoyl)-sn-glycero-3-phosphoethanolamine + H2O = 2-(9Z,12Z)-octadecadienoyl-sn-glycero-3-phosphoethanolamine + hexadecanoate + H(+). The enzyme catalyses 1-hexadecanoyl-2-(5Z,8Z,11Z,14Z-eicosatetraenoyl)-sn-glycero-3-phosphoethanolamine + H2O = 2-(5Z,8Z,11Z,14Z)-eicosatetraenoyl-sn-glycero-3-phosphoethanolamine + hexadecanoate + H(+). It catalyses the reaction 1-hexanoyl-2-acyl-sn-glycero-3-phosphocholine + H2O = hexanoate + a 2-acyl-sn-glycero-3-phosphocholine + H(+). It carries out the reaction 1,2-diheptadecanoyl-sn-glycero-3-phosphoethanolamine + 1-(9Z-octadecenoyl)-2-hexadecanoyl-sn-glycero-3-phosphocholine = 1,2-diheptadecanoyl-sn-glycero-3-phospho-N-hexadecanoyl-ethanolamine + 1-(9Z-octadecenoyl)-sn-glycero-3-phosphocholine + H(+). The catalysed reaction is 1,2-diheptadecanoyl-sn-glycero-3-phosphoethanolamine + 1-(9Z-octadecenoyl)-2-hexadecanoyl-sn-glycero-3-phosphocholine = 1,2-diheptadecanoyl-sn-glycero-3-phospho-N-(9Z-octadecenoyl)-ethanolamine + 2-hexadecanoyl-sn-glycero-3-phosphocholine + H(+). Its function is as follows. Exhibits both phospholipase A1/2 and acyltransferase activities. Shows phospholipase A1 (PLA1) and A2 (PLA2), catalyzing the calcium-independent release of fatty acids from the sn-1 or sn-2 position of glycerophospholipids. For most substrates, PLA1 activity is much higher than PLA2 activity. Shows O-acyltransferase activity, catalyzing the transfer of a fatty acyl group from glycerophospholipid to the hydroxyl group of lysophospholipid. Shows N-acyltransferase activity, catalyzing the calcium-independent transfer of a fatty acyl group at the sn-1 position of phosphatidylcholine (PC) and other glycerophospholipids to the primary amine of phosphatidylethanolamine (PE), forming N-acylphosphatidylethanolamine (NAPE), which serves as precursor for N-acylethanolamines (NAEs). Promotes keratinocyte differentiation via activation of TGM1. This is Phospholipase A and acyltransferase 4 from Homo sapiens (Human).